Here is a 42-residue protein sequence, read N- to C-terminus: Photosystem II reaction center protein J (42 aa).

A helical membrane pass occupies residues 10-30 (IPLWLVLTIIGLAAIALLALF).

This sequence belongs to the PsbJ family. PSII is composed of 1 copy each of membrane proteins PsbA, PsbB, PsbC, PsbD, PsbE, PsbF, PsbH, PsbI, PsbJ, PsbK, PsbL, PsbM, PsbT, PsbY, PsbZ, Psb30/Ycf12, at least 3 peripheral proteins of the oxygen-evolving complex and a large number of cofactors. It forms dimeric complexes.

It is found in the plastid. The protein resides in the chloroplast thylakoid membrane. Its function is as follows. This protein is a component of the reaction center of photosystem II. In terms of biological role, one of the components of the core complex of photosystem II (PSII). PSII is a light-driven water:plastoquinone oxidoreductase that uses light energy to abstract electrons from H(2)O, generating O(2) and a proton gradient subsequently used for ATP formation. It consists of a core antenna complex that captures photons, and an electron transfer chain that converts photonic excitation into a charge separation. This is Photosystem II reaction center protein J from Euglena gracilis.